We begin with the raw amino-acid sequence, 232 residues long: Large ribosomal subunit protein uL1 (232 aa).

Belongs to the universal ribosomal protein uL1 family. In terms of assembly, part of the 50S ribosomal subunit.

Functionally, binds directly to 23S rRNA. The L1 stalk is quite mobile in the ribosome, and is involved in E site tRNA release. In terms of biological role, protein L1 is also a translational repressor protein, it controls the translation of the L11 operon by binding to its mRNA. The chain is Large ribosomal subunit protein uL1 from Thermosipho africanus (strain TCF52B).